Reading from the N-terminus, the 496-residue chain is Lysine--tRNA ligase (496 aa).

Glu-409 and Glu-416 together coordinate Mg(2+).

The protein belongs to the class-II aminoacyl-tRNA synthetase family. Homodimer. The cofactor is Mg(2+).

Its subcellular location is the cytoplasm. The enzyme catalyses tRNA(Lys) + L-lysine + ATP = L-lysyl-tRNA(Lys) + AMP + diphosphate. The sequence is that of Lysine--tRNA ligase from Streptococcus gordonii (strain Challis / ATCC 35105 / BCRC 15272 / CH1 / DL1 / V288).